A 338-amino-acid polypeptide reads, in one-letter code: Heat-inducible transcription repressor HrcA (338 aa).

Belongs to the HrcA family.

In terms of biological role, negative regulator of class I heat shock genes (grpE-dnaK-dnaJ and groELS operons). Prevents heat-shock induction of these operons. The protein is Heat-inducible transcription repressor HrcA of Bacillus cereus (strain B4264).